The primary structure comprises 913 residues: Protein translocase subunit SecA (913 aa).

ATP-binding positions include Gln-87, 105–109 (GEGKT), and Asp-512. Residues Cys-897, Cys-899, Cys-908, and His-909 each coordinate Zn(2+).

It belongs to the SecA family. In terms of assembly, monomer and homodimer. Part of the essential Sec protein translocation apparatus which comprises SecA, SecYEG and auxiliary proteins SecDF-YajC and YidC. It depends on Zn(2+) as a cofactor.

The protein localises to the cell inner membrane. It localises to the cytoplasm. It carries out the reaction ATP + H2O + cellular proteinSide 1 = ADP + phosphate + cellular proteinSide 2.. Part of the Sec protein translocase complex. Interacts with the SecYEG preprotein conducting channel. Has a central role in coupling the hydrolysis of ATP to the transfer of proteins into and across the cell membrane, serving both as a receptor for the preprotein-SecB complex and as an ATP-driven molecular motor driving the stepwise translocation of polypeptide chains across the membrane. The chain is Protein translocase subunit SecA from Pseudomonas syringae pv. syringae (strain B728a).